The following is a 461-amino-acid chain: E3 ubiquitin-protein ligase parkin (461 aa).

A Ubiquitin-like domain is found at 30–90 (VNIYVKSNVG…DSTVIEVLDF (61 aa)). Residue serine 92 is modified to Phosphoserine. The RING-type 0; atypical zinc-finger motif lies at 145-227 (AHFFIYCANP…SQGENDTAVP (83 aa)). 4 residues coordinate Zn(2+): cysteine 151, cysteine 155, cysteine 167, and cysteine 170. Threonine 176 carries the phosphothreonine modification. 22 residues coordinate Zn(2+): cysteine 197, cysteine 202, cysteine 213, histidine 216, cysteine 240, cysteine 243, cysteine 255, histidine 259, cysteine 262, cysteine 265, cysteine 291, cysteine 295, cysteine 334, cysteine 339, cysteine 354, cysteine 356, cysteine 361, cysteine 364, histidine 369, cysteine 373, cysteine 415, and cysteine 418. A TRIAD supradomain region spans residues 236–461 (KKIPCLACTD…RDCMASHWFG (226 aa)). The RING-type 1 zinc finger occupies 240–295 (CLACTDICDPVLVFSCDNRHVTCLECFKNYCGSRLKDRQFLSHPDFGYTLPCPAGC). 2 IBR-type zinc fingers span residues 315-373 (EQYH…LGEC) and 411-452 (LTKP…PWER). Residues 415–446 (CPKCRTSTERAGGCMHMICTRANCGFHWCWVC) form an RING-type 2; atypical zinc finger. Cysteine 428 is a catalytic residue. Positions 433, 438, 443, 446, 454, and 458 each coordinate Zn(2+).

The protein belongs to the RBR family. Parkin subfamily. As to quaternary structure, forms an E3 ubiquitin ligase complex with E2 ubiquitin-conjugating enzymes. In terms of processing, auto-ubiquitinates in an E2-dependent manner leading to its own degradation. Post-translationally, phosphorylated. Activation requires phosphorylation at Ser-92 by Pink1 and binding to Pink1-phosphorylated polyubiquitin chains. Phosphorylation at Thr-176 by Pink1 is also important for mitochondrial localization.

The protein localises to the mitochondrion. The protein resides in the cytoplasm. It is found in the cytosol. It catalyses the reaction [E2 ubiquitin-conjugating enzyme]-S-ubiquitinyl-L-cysteine + [acceptor protein]-L-lysine = [E2 ubiquitin-conjugating enzyme]-L-cysteine + [acceptor protein]-N(6)-ubiquitinyl-L-lysine.. It functions in the pathway protein modification; protein ubiquitination. With respect to regulation, in the autoinhibited state the side chain of Phe-460 inserts into a hydrophobic groove in RING-0, occluding the ubiquitin acceptor site Cys-428, whereas the REP repressor element binds RING-1 and blocks its E2-binding site. Activation of park requires 2 steps: (1) phosphorylation at Ser-92 by Pink1 and (2) binding to phosphorylated ubiquitin, leading to unlock repression of the catalytic Cys-428 by the RING-0 region via an allosteric mechanism and converting park to its fully-active form. According to another report, phosphorylation at Ser-92 by Pink1 is not essential for activation and only binding to phosphorylated ubiquitin is essential to unlock repression. E3 ubiquitin-protein ligase which accepts ubiquitin from E2 ubiquitin-conjugating enzymes in the form of a thioester and then directly transfers the ubiquitin to targeted substrates, such as Marf, Opa1, Sep1, Tom20 and porin. Mediates monoubiquitination as well as 'Lys-6', 'Lys-11', 'Lys-48'-linked and 'Lys-63'-linked polyubiquitination of substrates, depending on the context. Protects against mitochondrial dysfunction during cellular stress, by acting downstream of Pink1, to coordinate mitochondrial quality control mechanisms that remove and replace dysfunctional mitochondrial components. Depending on the severity of mitochondrial damage and/or dysfunction, activity ranges from preventing apoptosis and stimulating mitochondrial biogenesis to regulating mitochondrial dynamics and eliminating severely damaged mitochondria via mitophagy. Appears to be particularly important in maintaining the physiology and function of cells with high energy demands that are undergoing stress or altered metabolic environment, including spermatids, muscle cells and neurons such as the dopaminergic (DA) neurons. Activation and recruitment onto the outer membrane of damaged/dysfunctional mitochondria (OMM) requires Pink1-mediated phosphorylation of both park and ubiquitin. In depolarized mitochondria, mediates the decision between mitophagy or preventing apoptosis by inducing either the poly- or monoubiquitination of porin/VDAC; polyubiquitination of porin promotes mitophagy, while monoubiquitination of porin decreases mitochondrial calcium influx which ultimately inhibits apoptosis. When cellular stress results in irreversible mitochondrial damage, promotes the autophagic degradation of dysfunctional depolarized mitochondria (mitophagy) by promoting the ubiquitination of mitochondrial proteins. Preferentially assembles 'Lys-6'-, 'Lys-11'- and 'Lys-63'-linked polyubiquitin chains following mitochondrial damage, leading to mitophagy. In developing tissues, inhibits JNK-mediated apoptosis by negatively regulating bsk transcription. The Pink1-park pathway also promotes fission and/or inhibits fusion of damaged mitochondria by mediating the ubiquitination and subsequent degradation of proteins involved in mitochondrial fusion/fission such as Marf and Opa1. This prevents the refusion of unhealthy mitochondria with the healthy mitochondrial network and/or initiates mitochondrial fragmentation facilitating their later engulfment by autophagosomes. Regulates motility of damaged mitochondria by phosphorylating Miro which likely promotes its park-dependent degradation by the proteasome; in motor neurons, this inhibits mitochondrial intracellular anterograde transport along the axons which probably increases the chance of the mitochondria being eliminated in the soma. The Pink1-park pathway is also involved in mitochondrial regeneration processes such as promoting mitochondrial biogenesis, activating localized mitochondrial repair, promoting selective turnover of mitochondrial proteins and initiating the mitochondrial import of endogenous proteins. Involved in mitochondrial biogenesis via the ubiquitination of transcriptional repressor Paris which leads to its subsequent proteasomal degradation and allows activation of the transcription factor srl. Promotes localized mitochondrial repair by activating the translation of specific nuclear-encoded mitochondrial RNAs (nc-mtRNAs) on the mitochondrial surface, including several key electron transport chain component nc-mtRNAs. The protein is E3 ubiquitin-protein ligase parkin of Pediculus humanus subsp. corporis (Body louse).